The chain runs to 524 residues: Alkaline phosphatase, tissue-nonspecific isozyme (524 aa).

An N-terminal signal peptide occupies residues 1-17; that stretch reads MISPFLVLAIGTCLTNS. A Mg(2+)-binding site is contributed by D60. D60 and S110 together coordinate Zn(2+). Catalysis depends on S110, which acts as the Phosphoserine intermediate. S110 carries the post-translational modification Phosphoserine. Residues C139 and C201 are joined by a disulfide bond. N140 carries an N-linked (GlcNAc...) asparagine glycan. T173 is a Mg(2+) binding site. N-linked (GlcNAc...) asparagine glycosylation is present at N230. Position 235 (E235) interacts with Ca(2+). N271 carries N-linked (GlcNAc...) asparagine glycosylation. Ca(2+) contacts are provided by F290 and E291. N303 carries N-linked (GlcNAc...) asparagine glycosylation. D306 contacts Ca(2+). Mg(2+) is bound at residue E332. Zn(2+) contacts are provided by D337, H341, D378, and H379. N-linked (GlcNAc...) asparagine glycosylation is present at N430. H454 is a binding site for Zn(2+). A disulfide bridge connects residues C489 and C497. Residue S501 is the site of GPI-anchor amidated serine attachment. Residues 502–524 constitute a propeptide, removed in mature form; that stretch reads SAGSLAAGPLLLALALYPLSVLF.

The protein belongs to the alkaline phosphatase family. In terms of assembly, homodimer. The cofactor is Mg(2+). Requires Zn(2+) as cofactor. Ca(2+) serves as cofactor. N-glycosylated.

The protein resides in the cell membrane. The protein localises to the extracellular vesicle membrane. It is found in the mitochondrion membrane. Its subcellular location is the mitochondrion intermembrane space. It catalyses the reaction a phosphate monoester + H2O = an alcohol + phosphate. It carries out the reaction diphosphate + H2O = 2 phosphate + H(+). The enzyme catalyses pyridoxal 5'-phosphate + H2O = pyridoxal + phosphate. The catalysed reaction is phosphoethanolamine + H2O = ethanolamine + phosphate. It catalyses the reaction N-phosphocreatine + H2O = creatine + phosphate. It carries out the reaction ATP + H2O = ADP + phosphate + H(+). The enzyme catalyses ADP + H2O = AMP + phosphate + H(+). The catalysed reaction is AMP + H2O = adenosine + phosphate. Its activity is regulated as follows. Phosphatase activity is specifically inhibited by 5-((5-chloro-2-methoxyphenyl)sulfonamido)nicotinamide (SBI-425). In terms of biological role, alkaline phosphatase that metabolizes various phosphate compounds and plays a key role in skeletal mineralization and adaptive thermogenesis. Has broad substrate specificity and can hydrolyze a considerable variety of compounds: however, only a few substrates, such as diphosphate (inorganic pyrophosphate; PPi), pyridoxal 5'-phosphate (PLP) and N-phosphocreatine are natural substrates. Plays an essential role in skeletal and dental mineralization via its ability to hydrolyze extracellular diphosphate, a potent mineralization inhibitor, to phosphate: it thereby promotes hydroxyapatite crystal formation and increases inorganic phosphate concentration. Acts in a non-redundant manner with PHOSPHO1 in skeletal mineralization: while PHOSPHO1 mediates the initiation of hydroxyapatite crystallization in the matrix vesicles (MVs), ALPL/TNAP catalyzes the spread of hydroxyapatite crystallization in the extracellular matrix. Also promotes dephosphorylation of osteopontin (SSP1), an inhibitor of hydroxyapatite crystallization in its phosphorylated state; it is however unclear whether ALPL/TNAP mediates SSP1 dephosphorylation via a direct or indirect manner. Catalyzes dephosphorylation of PLP to pyridoxal (PL), the transportable form of vitamin B6, in order to provide a sufficient amount of PLP in the brain, an essential cofactor for enzymes catalyzing the synthesis of diverse neurotransmitters. Additionally, also able to mediate ATP degradation in a stepwise manner to adenosine, thereby regulating the availability of ligands for purinergic receptors. Also capable of dephosphorylating microbial products, such as lipopolysaccharides (LPS) as well as other phosphorylated small-molecules, such as poly-inosine:cytosine (poly I:C). Acts as a key regulator of adaptive thermogenesis as part of the futile creatine cycle: localizes to the mitochondria of thermogenic fat cells and acts by mediating hydrolysis of N-phosphocreatine to initiate a futile cycle of creatine dephosphorylation and phosphorylation. During the futile creatine cycle, creatine and N-phosphocreatine are in a futile cycle, which dissipates the high energy charge of N-phosphocreatine as heat without performing any mechanical or chemical work. The chain is Alkaline phosphatase, tissue-nonspecific isozyme from Homo sapiens (Human).